The primary structure comprises 63 residues: Male-specific sperm protein Mst84Da (63 aa).

Belongs to the MST(3)CGP family. Testis.

This Drosophila melanogaster (Fruit fly) protein is Male-specific sperm protein Mst84Da (Mst84Da).